A 932-amino-acid chain; its full sequence is DNA mismatch repair protein MutS (932 aa).

An ATP-binding site is contributed by 615–622 (GPNMAGKS).

The protein belongs to the DNA mismatch repair MutS family.

This protein is involved in the repair of mismatches in DNA. It is possible that it carries out the mismatch recognition step. This protein has a weak ATPase activity. The sequence is that of DNA mismatch repair protein MutS from Clostridium botulinum (strain Okra / Type B1).